Reading from the N-terminus, the 319-residue chain is F-box only protein 8 (319 aa).

The F-box domain maps to 68 to 111 (FINLEMLPPELSFTILSYLNATDLCLASCVWQDLANDELLWQGL). Residues 146–276 (FNANPEEGVS…LILLSIDLTS (131 aa)) form the SEC7 domain.

As to expression, high expression in brain, heart, kidney, liver, lung, skeletal muscle, testis, and day-7 embryos.

Functionally, may promote guanine-nucleotide exchange on an ARF. Promotes the activation of ARF through replacement of GDP with GTP (Potential). This Mus musculus (Mouse) protein is F-box only protein 8 (Fbxo8).